The sequence spans 121 residues: Large ribosomal subunit protein bL12 (121 aa).

Belongs to the bacterial ribosomal protein bL12 family. In terms of assembly, homodimer. Part of the ribosomal stalk of the 50S ribosomal subunit. Forms a multimeric L10(L12)X complex, where L10 forms an elongated spine to which 2 to 4 L12 dimers bind in a sequential fashion. Binds GTP-bound translation factors.

In terms of biological role, forms part of the ribosomal stalk which helps the ribosome interact with GTP-bound translation factors. Is thus essential for accurate translation. The polypeptide is Large ribosomal subunit protein bL12 (Xanthomonas axonopodis pv. citri (strain 306)).